Here is a 49-residue protein sequence, read N- to C-terminus: Large ribosomal subunit protein bL33A (49 aa).

The protein belongs to the bacterial ribosomal protein bL33 family.

The sequence is that of Large ribosomal subunit protein bL33A from Staphylococcus aureus (strain Mu3 / ATCC 700698).